Consider the following 394-residue polypeptide: Putative serine protease HhoA (394 aa).

A signal peptide spans 1 to 24; that stretch reads MKYPTWLRRIGGYLLAFAVGTAFG. The region spanning 293–377 is the PDZ domain; it reads MMNITVDQAQ…ALKLDLLRGD (85 aa).

This sequence belongs to the peptidase S1C family.

Its subcellular location is the periplasm. Functionally, a putative protease, its function overlaps that of the related putative proteases HhoB and HtrA. The protein is Putative serine protease HhoA (hhoA) of Synechocystis sp. (strain ATCC 27184 / PCC 6803 / Kazusa).